We begin with the raw amino-acid sequence, 1173 residues long: Pyruvate-flavodoxin oxidoreductase (1173 aa).

4Fe-4S ferredoxin-type domains are found at residues 681-710 (NVPV…PVLI) and 735-766 (YRLA…MQPL). Cys-690, Cys-693, Cys-696, Cys-700, Cys-744, Cys-747, Cys-750, Cys-754, Cys-810, Cys-813, and Cys-838 together coordinate [4Fe-4S] cluster. Over residues 922 to 933 (GEGTRERAEKVG) the composition is skewed to basic and acidic residues. The segment at 922–946 (GEGTRERAEKVGDTSGFANAREKSR) is disordered. Cys-1075 contacts [4Fe-4S] cluster.

Belongs to the pyruvate:ferredoxin/flavodoxin oxidoreductase family. [4Fe-4S] cluster is required as a cofactor.

The enzyme catalyses oxidized [flavodoxin] + pyruvate + CoA + 2 H(+) = reduced [flavodoxin] + acetyl-CoA + CO2. Its function is as follows. Oxidoreductase required for the transfer of electrons from pyruvate to flavodoxin, which reduces nitrogenase. This chain is Pyruvate-flavodoxin oxidoreductase (nifJ), found in Enterobacter agglomerans (Erwinia herbicola).